Here is a 72-residue protein sequence, read N- to C-terminus: Large ribosomal subunit protein uL29 (72 aa).

It belongs to the universal ribosomal protein uL29 family.

The chain is Large ribosomal subunit protein uL29 from Caldicellulosiruptor bescii (strain ATCC BAA-1888 / DSM 6725 / KCTC 15123 / Z-1320) (Anaerocellum thermophilum).